The primary structure comprises 262 residues: Octanoyltransferase (262 aa).

The region spanning 60–248 (GTADELVWLV…AFEMVFGPTR (189 aa)) is the BPL/LPL catalytic domain. Substrate contacts are provided by residues 99-106 (RGGEYTYH), 179-181 (AIG), and 192-194 (GLS). C210 acts as the Acyl-thioester intermediate in catalysis.

This sequence belongs to the LipB family.

Its subcellular location is the cytoplasm. It catalyses the reaction octanoyl-[ACP] + L-lysyl-[protein] = N(6)-octanoyl-L-lysyl-[protein] + holo-[ACP] + H(+). Its pathway is protein modification; protein lipoylation via endogenous pathway; protein N(6)-(lipoyl)lysine from octanoyl-[acyl-carrier-protein]: step 1/2. Catalyzes the transfer of endogenously produced octanoic acid from octanoyl-acyl-carrier-protein onto the lipoyl domains of lipoate-dependent enzymes. Lipoyl-ACP can also act as a substrate although octanoyl-ACP is likely to be the physiological substrate. The chain is Octanoyltransferase from Sinorhizobium medicae (strain WSM419) (Ensifer medicae).